A 145-amino-acid chain; its full sequence is Synaptojanin-2-binding protein (145 aa).

The Cytoplasmic segment spans residues 1 to 117 (MNGRVDYLVT…GHRGEGDPSG (117 aa)). A PDZ domain is found at 13 to 100 (EINLTRGPSG…AVSLRVQHRL (88 aa)). Residues 118 to 138 (IPIFMVLVPVFALTMVAAWAF) traverse the membrane as a helical segment. Residues 139–145 (MRYRQQL) are Mitochondrial intermembrane-facing.

In terms of assembly, binds (via the PDZ domain) to isoform 2A of SYNJ2 (via the unique motif in the C-terminus). Interacts (via C-terminus) with RALBP1. Interacts (via PDZ domain) with ACVR2A (via C-terminus) and ACVR2B (via C-terminus). Forms a ternary complex with ACVR2A and RALBP1. Interacts with MAPK12. Interacts with DLL1; enhances DLL1 protein stability, and promotes notch signaling in endothelial cells.

It is found in the mitochondrion outer membrane. Functionally, regulates endocytosis of activin type 2 receptor kinases through the Ral/RALBP1-dependent pathway and may be involved in suppression of activin-induced signal transduction. The chain is Synaptojanin-2-binding protein (SYNJ2BP) from Homo sapiens (Human).